The primary structure comprises 404 residues: Triose phosphate/phosphate translocator, chloroplastic (404 aa).

Residues 1-74 (MESRVLSRTT…GPVCSRREKT (74 aa)) constitute a chloroplast transit peptide. Over 75-98 (AVQPCRAASGSSGEAKTGFLEKYP) the chain is Chloroplast intermembrane. A helical transmembrane segment spans residues 99–119 (ALVTGSFFFMWYFLNVIFNIL). At 120-131 (NKKIYNYFPYPY) the chain is on the lumenal side. The helical transmembrane segment at 132–152 (FVSVIHLFVGVVYCLASWSVG) threads the bilayer. At 153 to 209 (LPKRAPMDSKLLKLLIPVAVCHAIGHVTSNVSFAAVAVSFTHTIKALEPFFNAAASQ) the chain is on the chloroplast intermembrane side. Residues 210–230 (FVLGQSIPITLWLSLAPVVIG) form a helical membrane-spanning segment. At 231 to 274 (VSMASLTELSFNWLGFISAMISNVSFTYRSLYSKKAMTDMDSTN) the chain is on the lumenal side. Residues 275-294 (IYAYISIIALFVCLPPAIIV) form a helical membrane-spanning segment. Over 295–372 (EGPQLMKHGF…IAFGNKISTQ (78 aa)) the chain is Chloroplast intermembrane. Residues 373 to 393 (TAIGTSIAIAGVALYSLIKAK) traverse the membrane as a helical segment. The Lumenal portion of the chain corresponds to 394-404 (MEEEKRQMKST).

It belongs to the TPT transporter family. TPT (TC 2.A.7.9) subfamily. Post-translationally, the N-terminus is blocked.

It localises to the plastid. Its subcellular location is the chloroplast membrane. Mediates the export of fixed carbons from the chloroplasts into the cytosol in the form of triose phosphates. This chain is Triose phosphate/phosphate translocator, chloroplastic, found in Spinacia oleracea (Spinach).